Here is a 594-residue protein sequence, read N- to C-terminus: UvrABC system protein C (594 aa).

Residues 17-94 enclose the GIY-YIG domain; the sequence is LEPGCYLMKD…IKQYQPRYNI (78 aa). A UVR domain is found at 199–234; it reads KTILNHLEERMNKASEQLDFEQAKEYRDMIQHIHNL.

The protein belongs to the UvrC family. As to quaternary structure, interacts with UvrB in an incision complex.

Its subcellular location is the cytoplasm. In terms of biological role, the UvrABC repair system catalyzes the recognition and processing of DNA lesions. UvrC both incises the 5' and 3' sides of the lesion. The N-terminal half is responsible for the 3' incision and the C-terminal half is responsible for the 5' incision. The polypeptide is UvrABC system protein C (Staphylococcus epidermidis (strain ATCC 35984 / DSM 28319 / BCRC 17069 / CCUG 31568 / BM 3577 / RP62A)).